Consider the following 578-residue polypeptide: Probable lysosomal cobalamin transporter (578 aa).

Helical transmembrane passes span 8-28 and 46-66; these read LIWVVYAIAIAVLIAVASVFI and IFAITTLLATVLLLPVDVALV. N70 is a glycosylation site (N-linked (GlcNAc...) asparagine). A run of 2 helical transmembrane segments spans residues 95 to 115 and 145 to 165; these read VVYYLLYSLDALLCLLVIPFT and TITFIAIVIVLFLVGFFVPVA. N-linked (GlcNAc...) asparagine glycosylation is present at N168. Helical transmembrane passes span 188–208, 312–332, 347–367, 375–395, 419–439, and 506–526; these read ALTFALGLLITIGLCLYVLYT, LLGGIILLIIALVIWVSMLLT, GYILGHITVFNPINWVFVQAA, VIFTLLVLLFFCSSVVGIAIV, LTTAMLMLTILALNYSVSMVV, and FFGVIFFWGQFVFLGVYLIVV. A disordered region spans residues 539–578; it reads RQMDEDAEEAEEEGLLASTGRRLDTAWQDITGRSNRQRDS. A compositionally biased stretch (acidic residues) spans 540–552; the sequence is QMDEDAEEAEEEG.

Belongs to the LIMR family. LMBRD1 subfamily.

The protein resides in the lysosome membrane. Functionally, probable lysosomal cobalamin transporter. Required to export cobalamin from lysosomes allowing its conversion to cofactors. The chain is Probable lysosomal cobalamin transporter from Aspergillus terreus (strain NIH 2624 / FGSC A1156).